The sequence spans 501 residues: MSSLARTTRADVVLVGAGIMSATLGALLRRLQPDWSMTFVERLDAVAAESSSPWNNAGTGHSALCELNYTPQRADGSIDIAKAVRINEQFQVTRQFWAYAVENGMLTDRGFVTPIPHASFVRGARAVEYLRRRQQALAPNPLFAGIELIEDADEFARRLPLMADRRDFSEPTALNWARHGTDVDFGALSRQLIGFCVRGGATALFGHQVHNLTRESDGSWTLLIRNRRTGEKHWCNAKFVLVGAGGDALPLLQKSGIGEARGFAGFPIGGRFLRADNPVLTEAHRAKVYGAPAPGAPPLGALHLDLRYVNGKPWLVFGPYAGWSPKFLKHGHFTDLPRSVRPHNLVALLGVGVTQLTLLRYLIGQLRLSAPDRMRMLREFAPTAVDSDWELTVAGQRVQVIRRDRRRGGVLDFDTTVVAAGDGSIAGLLGGSPGASTAVPIMLDVLQRCFADRYRSWLPALKEMVPSLGVTLSDEPALYEEVYSWGTKILGLDELDEERPK.

This sequence belongs to the MQO family. It depends on FAD as a cofactor.

The enzyme catalyses (S)-malate + a quinone = a quinol + oxaloacetate. The protein operates within carbohydrate metabolism; tricarboxylic acid cycle; oxaloacetate from (S)-malate (quinone route): step 1/1. The sequence is that of Probable malate:quinone oxidoreductase from Mycolicibacterium paratuberculosis (strain ATCC BAA-968 / K-10) (Mycobacterium paratuberculosis).